The chain runs to 273 residues: Diadenylate cyclase (273 aa).

3 consecutive transmembrane segments (helical) span residues 12–32 (LANIVDILVVWFVIYKVIMLI), 37–57 (AVQLLKGIFIIIAVKLLSGFF), and 61–81 (TVEWITDQMLTWGFLAIIIIF). In terms of domain architecture, DAC spans 82-242 (QPELRRALET…GGELFRDVSE (161 aa)).

This sequence belongs to the adenylate cyclase family. DacA/CdaA subfamily. As to quaternary structure, probably a homodimer.

It is found in the cell membrane. It catalyses the reaction 2 ATP = 3',3'-c-di-AMP + 2 diphosphate. Catalyzes the condensation of 2 ATP molecules into cyclic di-AMP (c-di-AMP), a signaling compound secreted into the host's cytosol where it triggers the cytosolic surveillance pathway (CSP), a host pathway of innate immunity characterized by expression of beta interferon (IFN-beta) and coregulated genes. Overexpression increases export of c-di-AMP. c-di-AMP is a second messenger that mediates growth, cell wall stability and virulence. This chain is Diadenylate cyclase, found in Listeria monocytogenes serotype 1/2a (strain 10403S).